Consider the following 469-residue polypeptide: Phenolic glucoside malonyltransferase 1 (469 aa).

Met1 carries the N-acetylmethionine modification. The Proton acceptor role is filled by His169. Residues 169 to 173 (HAVLD) carry the HXXXD motif motif. Position 291–292 (291–292 (ST)) interacts with malonyl-CoA. Asp413 (proton acceptor) is an active-site residue. The short motif at 413–417 (DFGWG) is the DFGWG motif element.

It belongs to the plant acyltransferase family. Phenolic glucoside malonyltransferase subfamily.

The enzyme catalyses a flavonol 3-O-beta-D-glucoside + malonyl-CoA = a flavonol 3-O-(6-O-malonyl-beta-D-glucoside) + CoA. The catalysed reaction is a flavonol 7-O-beta-D-glucoside + malonyl-CoA = a flavonol 7-O-(6-O-malonyl-beta-D-glucoside) + CoA. Functionally, malonyltransferase acting on xenobiotic glucosides. Has activity toward 2-Naphthol glucoside (2NAG), 1-Naphthol glucoside (1NAG), kaempferol 7-O-glucoside, kaempferol 3-O-glucoside, hydroxycoumarin glucosides, phenol-glucosides and isoflavone glucoside (daidzin), but not toward 4-coumaroyl glucoside, kaempferol 3,7-O-diglucoside, salicylic acid glucoside and phlorizin. In vivo, seems to be involved in the malonylation of 2-Naphthol glucoside while PMAT2 would be involved in the malonylation of 4-methylumbelliferone glucoside or 4-nitrophenyl glucoside. The polypeptide is Phenolic glucoside malonyltransferase 1 (PMAT1) (Arabidopsis thaliana (Mouse-ear cress)).